Consider the following 183-residue polypeptide: Negative modulator of initiation of replication (183 aa).

Residues 43–70 are disordered; sequence VNDTQPVSAPAPSKAAPSAGNESRPQDR. Residues 50–61 show a composition bias toward low complexity; it reads SAPAPSKAAPSA. Interaction with DNA stretches follow at residues 89–90, 118–122, and 152–158; these read AV, RTRIY, and NTNTGRK.

This sequence belongs to the SeqA family. Homodimer. Polymerizes to form helical filaments.

The protein resides in the cytoplasm. In terms of biological role, negative regulator of replication initiation, which contributes to regulation of DNA replication and ensures that replication initiation occurs exactly once per chromosome per cell cycle. Binds to pairs of hemimethylated GATC sequences in the oriC region, thus preventing assembly of replication proteins and re-initiation at newly replicated origins. Repression is relieved when the region becomes fully methylated. This Pantoea ananatis (strain AJ13355) protein is Negative modulator of initiation of replication.